The sequence spans 422 residues: Exopolygalacturonase clone GBGE184 (422 aa).

The N-terminal stretch at Met1 to Ala31 is a signal peptide. PbH1 repeat units lie at residues Thr200–Asn226, Ala227–Arg248, Ser250–Ser270, Val280–Thr301, and Ala310–Gln331. The N-linked (GlcNAc...) asparagine glycan is linked to Asn229. The active-site Proton donor is the Asp241. Cys243 and Cys260 are disulfide-bonded. N-linked (GlcNAc...) asparagine glycosylation is present at Asn252. The active site involves His264. Asn287 carries N-linked (GlcNAc...) asparagine glycosylation. Cystine bridges form between Cys366/Cys372 and Cys404/Cys420.

The protein belongs to the glycosyl hydrolase 28 family.

It is found in the secreted. The protein resides in the cell wall. It catalyses the reaction [(1-&gt;4)-alpha-D-galacturonosyl](n) + H2O = alpha-D-galacturonate + [(1-&gt;4)-alpha-D-galacturonosyl](n-1). May function in depolymerizing pectin during pollen development, germination, and tube growth. Acts as an exo-polygalacturonase. The protein is Exopolygalacturonase clone GBGE184 (PGA3) of Arabidopsis thaliana (Mouse-ear cress).